The chain runs to 46 residues: Major urinary protein (46 aa).

Residue Asn-15 is glycosylated (N-linked (GlcNAc...) asparagine).

This sequence belongs to the calycin superfamily. Lipocalin family. As to expression, found in many tissues including liver, urine, preputial gland, clitoral gland, submandibular gland and salivary gland.

The protein resides in the secreted. Binds pheromones that are released from drying urine of males. These pheromones affect the sexual behavior of females. Acts as a shuttle for pheromonal communication between individuals of the same species. The polypeptide is Major urinary protein (Rattus rattus (Black rat)).